The chain runs to 139 residues: Holo-[acyl-carrier-protein] synthase (139 aa).

Residues Asp-8 and Glu-61 each coordinate Mg(2+).

This sequence belongs to the P-Pant transferase superfamily. AcpS family. Mg(2+) is required as a cofactor.

The protein resides in the cytoplasm. It catalyses the reaction apo-[ACP] + CoA = holo-[ACP] + adenosine 3',5'-bisphosphate + H(+). Functionally, transfers the 4'-phosphopantetheine moiety from coenzyme A to a Ser of acyl-carrier-protein. The polypeptide is Holo-[acyl-carrier-protein] synthase (Rhodopseudomonas palustris (strain BisA53)).